A 75-amino-acid polypeptide reads, in one-letter code: Large ribosomal subunit protein bL31 (75 aa).

This sequence belongs to the bacterial ribosomal protein bL31 family. Type A subfamily. As to quaternary structure, part of the 50S ribosomal subunit.

Binds the 23S rRNA. The polypeptide is Large ribosomal subunit protein bL31 (Pelodictyon phaeoclathratiforme (strain DSM 5477 / BU-1)).